The following is a 193-amino-acid chain: Ribonuclease HII (193 aa).

In terms of domain architecture, RNase H type-2 spans 15-193; that stretch reads YIVAGIDEAG…PYHRKSFKCC (179 aa). A divalent metal cation is bound by residues aspartate 21, glutamate 22, and aspartate 112.

The protein belongs to the RNase HII family. Mn(2+) serves as cofactor. The cofactor is Mg(2+).

The protein localises to the cytoplasm. It catalyses the reaction Endonucleolytic cleavage to 5'-phosphomonoester.. In terms of biological role, endonuclease that specifically degrades the RNA of RNA-DNA hybrids. This is Ribonuclease HII from Rickettsia akari (strain Hartford).